Here is a 64-residue protein sequence, read N- to C-terminus: Conotoxin Tx3.5-a (64 aa).

The first 19 residues, 1-19 (MSKLGVLLTICLLLFPLTA), serve as a signal peptide directing secretion. Positions 20–47 (LPLDGDQPADQAAERMQAEQHPLFDQKR) are excised as a propeptide. Disulfide bonds link C49-C58, C50-C62, and C54-C63. At C63 the chain carries Cysteine amide.

It belongs to the conotoxin M superfamily. In terms of processing, contains 3 disulfide bonds. Two peptides are produced from this precursor. Conotoxin Tx3.5-b is amidated at Cys-63, conotoxin Tx3.5-a has an unmodified C-terminus. In terms of tissue distribution, expressed by the venom duct. Is present in all duct parts with a highest content in part 2 (proximal of the venom bulb) and then decreases in concentration toward the end of the duct.

It localises to the secreted. The chain is Conotoxin Tx3.5-a from Conus textile (Cloth-of-gold cone).